Here is a 101-residue protein sequence, read N- to C-terminus: MAKKSKIARDAQRRAVVARYAQRRAELKRIIAAPGSSPEERAAAQQELRRQPRDASATRLRNRDAVDGRPRGYFRKFGLSRVRLRQLAHSGELPGVTKSSW.

Residues 31-69 (IAAPGSSPEERAAAQQELRRQPRDASATRLRNRDAVDGR) are disordered. Over residues 38–53 (PEERAAAQQELRRQPR) the composition is skewed to basic and acidic residues.

The protein belongs to the universal ribosomal protein uS14 family. Part of the 30S ribosomal subunit. Contacts proteins S3 and S10.

Binds 16S rRNA, required for the assembly of 30S particles and may also be responsible for determining the conformation of the 16S rRNA at the A site. In Saccharopolyspora erythraea (strain ATCC 11635 / DSM 40517 / JCM 4748 / NBRC 13426 / NCIMB 8594 / NRRL 2338), this protein is Small ribosomal subunit protein uS14A.